The sequence spans 78 residues: Putative antitoxin PF1222 (78 aa).

This sequence belongs to the UPF0330 family.

Possibly the antitoxin component of a type II toxin-antitoxin (TA) system. In Pyrococcus furiosus (strain ATCC 43587 / DSM 3638 / JCM 8422 / Vc1), this protein is Putative antitoxin PF1222.